We begin with the raw amino-acid sequence, 442 residues long: Chromosomal replication initiator protein DnaA (442 aa).

Positions M1 to A84 are domain I, interacts with DnaA modulators. The domain II stretch occupies residues A84–N105. The domain III, AAA+ region stretch occupies residues N106–A322. ATP is bound by residues G150, G152, K153, and T154. The tract at residues Q323–N442 is domain IV, binds dsDNA.

It belongs to the DnaA family. In terms of assembly, oligomerizes as a right-handed, spiral filament on DNA at oriC.

The protein resides in the cytoplasm. Functionally, plays an essential role in the initiation and regulation of chromosomal replication. ATP-DnaA binds to the origin of replication (oriC) to initiate formation of the DNA replication initiation complex once per cell cycle. Binds the DnaA box (a 9 base pair repeat at the origin) and separates the double-stranded (ds)DNA. Forms a right-handed helical filament on oriC DNA; dsDNA binds to the exterior of the filament while single-stranded (ss)DNA is stabiized in the filament's interior. The ATP-DnaA-oriC complex binds and stabilizes one strand of the AT-rich DNA unwinding element (DUE), permitting loading of DNA polymerase. After initiation quickly degrades to an ADP-DnaA complex that is not apt for DNA replication. Binds acidic phospholipids. The protein is Chromosomal replication initiator protein DnaA of Methylococcus capsulatus (strain ATCC 33009 / NCIMB 11132 / Bath).